Here is a 424-residue protein sequence, read N- to C-terminus: GDP-fucose protein O-fucosyltransferase 2 (424 aa).

Positions 1–20 (MHFFPIQLLVLFFAEKIAFA) are cleaved as a signal peptide. 51-55 (GEGFN) serves as a coordination point for GDP-beta-L-fucose. E52 (proton acceptor) is an active-site residue. Residues C154 and C187 are joined by a disulfide bond. A glycan (N-linked (GlcNAc...) asparagine) is linked at N205. GDP-beta-L-fucose-binding positions include 288–290 (HWR), D366, and 383–384 (TF). C407 and C414 form a disulfide bridge.

The protein belongs to the glycosyltransferase 68 family. In terms of tissue distribution, expressed in the anterior part of embryos, in the hypodermal and neuronal cells of the head. Expressed at different levels in a variety of cell types after hatching, including neuronal, hypodermal, muscle, intestinal, and somatic gonadal cells. Expressed in the nerve ring around the pharynx, in dorsal and ventral nerve cords, intestine, and a variety of hypodermal cells of L1-L3 larvae. Expressed in gonadal sheath cells, spermatheca, and tissues surrounding the vulva of adult hermaphrodites, and in the body wall muscle and hypodermal cells of adults of both sexes.

Its subcellular location is the endoplasmic reticulum. It is found in the golgi apparatus. It catalyses the reaction L-seryl-[protein] + GDP-beta-L-fucose = 3-O-(alpha-L-fucosyl)-L-seryl-[protein] + GDP + H(+). It carries out the reaction L-threonyl-[protein] + GDP-beta-L-fucose = 3-O-(alpha-L-fucosyl)-L-threonyl-[protein] + GDP + H(+). The protein operates within protein modification; protein glycosylation. In terms of biological role, catalyzes the reaction that attaches fucose through an O-glycosidic linkage to a conserved serine or threonine residue in the consensus sequence C1-X-X-S/T-C2 of thrombospondin type I repeats (TSRs) where C1 and C2 are the first and second cysteines of the repeat, respectively. O-fucosylates members of several protein families including the ADAMTS superfamily and the thrombospondin (TSP) and spondin families. The chain is GDP-fucose protein O-fucosyltransferase 2 (pad-2) from Caenorhabditis elegans.